Consider the following 234-residue polypeptide: MEFSPPLQLATLIQRYKRFLADVITPDGRELTLHCPNTGAMTGCATPGDTVWYSTSDNTKRKYPHTWELTQSQSGAFICVNTLWANRLTKEAILNESISELSGYSSLKSEVKYGAERSRIDFMLQADSRPDCYIEVKSVTLAENEQGYFPDAVTERGQKHLRELMSVAAEGQRAVIFFAVLHSAITRFSPARHIDEKYAQLLSEAQQRGVEILAYKAEISAEGMALKKSLPVTL.

Positions 201-220 form a DNA-binding region, H-T-H motif; the sequence is LLSEAQQRGVEILAYKAEIS.

The protein belongs to the SfsA family.

Binds to DNA non-specifically. Could be a regulatory factor involved in maltose metabolism. This is Sugar fermentation stimulation protein A from Shigella dysenteriae serotype 1 (strain Sd197).